We begin with the raw amino-acid sequence, 540 residues long: Putative rhamnogalacturonase (540 aa).

An N-terminal signal peptide occupies residues 1 to 23; that stretch reads MGFLTLFHMAFLAVSLFVSGALA. Cystine bridges form between C53–C100 and C192–C203. N-linked (GlcNAc...) asparagine glycosylation occurs at N89. N-linked (GlcNAc...) asparagine glycosylation is present at N368.

The protein belongs to the polysaccharide lyase 4 family.

The protein localises to the secreted. The enzyme catalyses Endotype eliminative cleavage of L-alpha-rhamnopyranosyl-(1-&gt;4)-alpha-D-galactopyranosyluronic acid bonds of rhamnogalacturonan I domains in ramified hairy regions of pectin leaving L-rhamnopyranose at the reducing end and 4-deoxy-4,5-unsaturated D-galactopyranosyluronic acid at the non-reducing end.. Functionally, could be a pectinolytic enzyme that hydrolyzes the alpha-L-rhamnopyranosyl-(1,4)-alpha-D-galacturonopyranosyl glycosidic linkage by beta-elimination, thereby generating oligosaccharides terminating at the non-reducing end with a hex-4-enopyranosyluronic acid residue. This Neurospora crassa (strain ATCC 24698 / 74-OR23-1A / CBS 708.71 / DSM 1257 / FGSC 987) protein is Putative rhamnogalacturonase (asd-1).